A 237-amino-acid polypeptide reads, in one-letter code: Phosphoribosylaminoimidazole-succinocarboxamide synthase (237 aa).

The protein belongs to the SAICAR synthetase family.

The enzyme catalyses 5-amino-1-(5-phospho-D-ribosyl)imidazole-4-carboxylate + L-aspartate + ATP = (2S)-2-[5-amino-1-(5-phospho-beta-D-ribosyl)imidazole-4-carboxamido]succinate + ADP + phosphate + 2 H(+). It functions in the pathway purine metabolism; IMP biosynthesis via de novo pathway; 5-amino-1-(5-phospho-D-ribosyl)imidazole-4-carboxamide from 5-amino-1-(5-phospho-D-ribosyl)imidazole-4-carboxylate: step 1/2. This is Phosphoribosylaminoimidazole-succinocarboxamide synthase from Methanosarcina acetivorans (strain ATCC 35395 / DSM 2834 / JCM 12185 / C2A).